The chain runs to 486 residues: Probable glycine dehydrogenase (decarboxylating) subunit 2 (486 aa).

N6-(pyridoxal phosphate)lysine is present on Lys-273.

The protein belongs to the GcvP family. C-terminal subunit subfamily. As to quaternary structure, the glycine cleavage system is composed of four proteins: P, T, L and H. In this organism, the P 'protein' is a heterodimer of two subunits. Pyridoxal 5'-phosphate serves as cofactor.

The catalysed reaction is N(6)-[(R)-lipoyl]-L-lysyl-[glycine-cleavage complex H protein] + glycine + H(+) = N(6)-[(R)-S(8)-aminomethyldihydrolipoyl]-L-lysyl-[glycine-cleavage complex H protein] + CO2. In terms of biological role, the glycine cleavage system catalyzes the degradation of glycine. The P protein binds the alpha-amino group of glycine through its pyridoxal phosphate cofactor; CO(2) is released and the remaining methylamine moiety is then transferred to the lipoamide cofactor of the H protein. The polypeptide is Probable glycine dehydrogenase (decarboxylating) subunit 2 (Alkaliphilus oremlandii (strain OhILAs) (Clostridium oremlandii (strain OhILAs))).